The following is a 230-amino-acid chain: Flagellar L-ring protein (230 aa).

The N-terminal stretch at 1–15 (MSRLPSLSSLCLAIA) is a signal peptide. Cys-16 carries the N-palmitoyl cysteine lipid modification. Cys-16 is lipidated: S-diacylglycerol cysteine.

Belongs to the FlgH family. In terms of assembly, the basal body constitutes a major portion of the flagellar organelle and consists of four rings (L,P,S, and M) mounted on a central rod.

The protein resides in the cell outer membrane. It is found in the bacterial flagellum basal body. Assembles around the rod to form the L-ring and probably protects the motor/basal body from shearing forces during rotation. In Xanthomonas campestris pv. campestris (strain 8004), this protein is Flagellar L-ring protein.